Consider the following 545-residue polypeptide: Glucans biosynthesis protein G (545 aa).

An N-terminal signal peptide occupies residues 1–34 (MVSLLRCQSFKPSSSLICSLALSAAFALSSSAFA). The tract at residues 38–60 (KPAENKPATPVVSPPKATAQPAN) is disordered.

The protein belongs to the OpgD/OpgG family.

It is found in the periplasm. Its pathway is glycan metabolism; osmoregulated periplasmic glucan (OPG) biosynthesis. In terms of biological role, involved in the biosynthesis of osmoregulated periplasmic glucans (OPGs). The protein is Glucans biosynthesis protein G of Shewanella sp. (strain MR-7).